A 352-amino-acid polypeptide reads, in one-letter code: Protein-glutamate methylesterase/protein-glutamine glutaminase 2 (352 aa).

A Response regulatory domain is found at 1–116 (MVVDDSAVVR…KQFLTDSADE (116 aa)). The residue at position 50 (D50) is a 4-aspartylphosphate. Positions 162 to 352 (AQTTERIVAI…MAREIVTQLQ (191 aa)) constitute a CheB-type methylesterase domain. Active-site residues include S174, H200, and D296.

This sequence belongs to the CheB family. Post-translationally, phosphorylated by CheA. Phosphorylation of the N-terminal regulatory domain activates the methylesterase activity.

The protein resides in the cytoplasm. The enzyme catalyses [protein]-L-glutamate 5-O-methyl ester + H2O = L-glutamyl-[protein] + methanol + H(+). It carries out the reaction L-glutaminyl-[protein] + H2O = L-glutamyl-[protein] + NH4(+). In terms of biological role, involved in chemotaxis. Part of a chemotaxis signal transduction system that modulates chemotaxis in response to various stimuli. Catalyzes the demethylation of specific methylglutamate residues introduced into the chemoreceptors (methyl-accepting chemotaxis proteins or MCP) by CheR. Also mediates the irreversible deamidation of specific glutamine residues to glutamic acid. The chain is Protein-glutamate methylesterase/protein-glutamine glutaminase 2 from Xanthomonas axonopodis pv. citri (strain 306).